The chain runs to 480 residues: 6-phosphogluconate dehydrogenase, decarboxylating 1 (480 aa).

Residues 10-15 (GLAVMG), 33-35 (NRT), 77-79 (VKA), and N105 each bind NADP(+). Substrate is bound by residues N105 and 131-133 (SGG). K186 acts as the Proton acceptor in catalysis. 189 to 190 (HN) contributes to the substrate binding site. Residue E193 is the Proton donor of the active site. Y194, K264, R291, R450, and H456 together coordinate substrate.

This sequence belongs to the 6-phosphogluconate dehydrogenase family. Homodimer. Highly expressed in inflorescence, lowly expressed in root and embryos and almost absent in leaves.

Its subcellular location is the cytoplasm. It catalyses the reaction 6-phospho-D-gluconate + NADP(+) = D-ribulose 5-phosphate + CO2 + NADPH. It participates in carbohydrate degradation; pentose phosphate pathway; D-ribulose 5-phosphate from D-glucose 6-phosphate (oxidative stage): step 3/3. In terms of biological role, catalyzes the oxidative decarboxylation of 6-phosphogluconate to ribulose 5-phosphate and CO(2), with concomitant reduction of NADP to NADPH. The chain is 6-phosphogluconate dehydrogenase, decarboxylating 1 (G6PGH1) from Oryza sativa subsp. japonica (Rice).